Reading from the N-terminus, the 213-residue chain is rRNA N(6)-adenosine-methyltransferase Mettl5 (213 aa).

Residues Q28, T31, G59, C62, and 108 to 109 (DV) contribute to the S-adenosyl-L-methionine site.

Belongs to the methyltransferase superfamily. PrmA family. In terms of assembly, heterodimer; heterodimerizes with Trmt112. In terms of tissue distribution, enriched in the brain.

It localises to the cytoplasm. It carries out the reaction adenosine in rRNA + S-adenosyl-L-methionine = N(6)-methyladenosine in rRNA + S-adenosyl-L-homocysteine + H(+). In terms of biological role, catalytic subunit of a heterodimer with Trmt112, which specifically methylates the 6th position of adenine in 18S rRNA. In Drosophila melanogaster (Fruit fly), this protein is rRNA N(6)-adenosine-methyltransferase Mettl5.